The chain runs to 745 residues: Copper-transporting ATPase (745 aa).

In terms of domain architecture, HMA spans 1–67 (MKESFYIEGM…LIEKLGYSPK (67 aa)). The Cytoplasmic portion of the chain corresponds to 1–83 (MKESFYIEGM…KKEFFSPNVK (83 aa)). Cu cation-binding residues include C12 and C15. The chain crosses the membrane as a helical span at residues 84-104 (LALAVIFTLFVVYLSMGAMLS). Residues 105–124 (PSLLPESLLAINNHSNFLNA) lie on the Extracellular side of the membrane. Residues 125–144 (CLQLIGALIVMHLGRDFYIQ) traverse the membrane as a helical segment. The Cytoplasmic portion of the chain corresponds to 145-151 (GFKALWH). Residues 152 to 172 (RQPNMSSLIAIGTSAALISSL) traverse the membrane as a helical segment. Residues 173–194 (WQLYLVYTNHYTDQWSYGHYYF) lie on the Extracellular side of the membrane. A helical membrane pass occupies residues 195–215 (ESVCVILMFVMVGKRIENVSK). Over 216–343 (DKALDAMQAL…KAEISRLADK (128 aa)) the chain is Cytoplasmic. Residues 344 to 366 (VSSVFVPSVIAIAILAFVVWLII) traverse the membrane as a helical segment. Over 367–379 (APKPDFWWNFGIA) the chain is Extracellular. Residues 380–397 (LEVFVSVLVISCPCALGL) traverse the membrane as a helical segment. Topologically, residues 398-685 (ATPMSILVAN…KLSQATIKNI (288 aa)) are cytoplasmic. D435 functions as the 4-aspartylphosphate intermediate in the catalytic mechanism. Positions 631 and 635 each coordinate Mg(2+). The helical transmembrane segment at 686 to 705 (KENLFWAFCYNSVFIPLACG) threads the bilayer. At 706 to 716 (VLYKANIMLSP) the chain is on the extracellular side. The helical transmembrane segment at 717–735 (AIAGLAMSLSSVSVVLNSQ) threads the bilayer. Over 736–745 (RLRNFKIKDH) the chain is Cytoplasmic.

It belongs to the cation transport ATPase (P-type) (TC 3.A.3) family. Type IB subfamily.

It localises to the cell membrane. It catalyses the reaction Cu(2+)(in) + ATP + H2O = Cu(2+)(out) + ADP + phosphate + H(+). Its function is as follows. Probably involved in copper export. In Helicobacter pylori (Campylobacter pylori), this protein is Copper-transporting ATPase (copA).